A 162-amino-acid polypeptide reads, in one-letter code: Putative 4-hydroxy-4-methyl-2-oxoglutarate aldolase (162 aa).

Substrate is bound by residues 75–78 and Arg97; that span reads GDML. Asp98 contributes to the a divalent metal cation binding site.

It belongs to the class II aldolase/RraA-like family. In terms of assembly, homotrimer. The cofactor is a divalent metal cation.

It carries out the reaction 4-hydroxy-4-methyl-2-oxoglutarate = 2 pyruvate. The enzyme catalyses oxaloacetate + H(+) = pyruvate + CO2. In terms of biological role, catalyzes the aldol cleavage of 4-hydroxy-4-methyl-2-oxoglutarate (HMG) into 2 molecules of pyruvate. Also contains a secondary oxaloacetate (OAA) decarboxylase activity due to the common pyruvate enolate transition state formed following C-C bond cleavage in the retro-aldol and decarboxylation reactions. This is Putative 4-hydroxy-4-methyl-2-oxoglutarate aldolase from Pseudomonas syringae pv. tomato (strain ATCC BAA-871 / DC3000).